A 219-amino-acid polypeptide reads, in one-letter code: Glutathione S-transferase (219 aa).

The 88-residue stretch at 2-89 (SQPILGYWDI…YLGRKYKLNG (88 aa)) folds into the GST N-terminal domain. Glutathione contacts are provided by residues 8–9 (YW), 44–47 (RSEW), K51, 60–61 (NL), and 73–74 (QT). Residues 91–207 (NDHEEIRISM…YIKKQQPKTF (117 aa)) form the GST C-terminal domain. Position 117 (Y117) interacts with substrate.

This sequence belongs to the GST superfamily. Mu family. As to quaternary structure, homodimer.

The protein localises to the cytoplasm. It carries out the reaction RX + glutathione = an S-substituted glutathione + a halide anion + H(+). This is Glutathione S-transferase from Dermatophagoides pteronyssinus (European house dust mite).